Consider the following 664-residue polypeptide: Threonine--tRNA ligase (664 aa).

The 64-residue stretch at 1-64 (MSELLKITLP…TADAQLALVT (64 aa)) folds into the TGS domain. A catalytic region spans residues 250–559 (DHRKLGNEMD…LIEHFAGRLP (310 aa)). The Zn(2+) site is built by cysteine 355, histidine 406, and histidine 536.

The protein belongs to the class-II aminoacyl-tRNA synthetase family. In terms of assembly, homodimer. Zn(2+) serves as cofactor.

Its subcellular location is the cytoplasm. It carries out the reaction tRNA(Thr) + L-threonine + ATP = L-threonyl-tRNA(Thr) + AMP + diphosphate + H(+). Catalyzes the attachment of threonine to tRNA(Thr) in a two-step reaction: L-threonine is first activated by ATP to form Thr-AMP and then transferred to the acceptor end of tRNA(Thr). Also edits incorrectly charged L-seryl-tRNA(Thr). In Novosphingobium aromaticivorans (strain ATCC 700278 / DSM 12444 / CCUG 56034 / CIP 105152 / NBRC 16084 / F199), this protein is Threonine--tRNA ligase.